The chain runs to 175 residues: NADH-ubiquinone oxidoreductase chain 6 (175 aa).

A run of 5 helical transmembrane segments spans residues 1–21 (MMLY…VGFS), 25–45 (SPIY…GIVL), 47–67 (FGGS…MMVV), 88–108 (AVLG…YYVL), and 149–169 (YGTW…VVIM).

This sequence belongs to the complex I subunit 6 family. In terms of assembly, core subunit of respiratory chain NADH dehydrogenase (Complex I) which is composed of 45 different subunits.

The protein resides in the mitochondrion inner membrane. The enzyme catalyses a ubiquinone + NADH + 5 H(+)(in) = a ubiquinol + NAD(+) + 4 H(+)(out). Core subunit of the mitochondrial membrane respiratory chain NADH dehydrogenase (Complex I) which catalyzes electron transfer from NADH through the respiratory chain, using ubiquinone as an electron acceptor. Essential for the catalytic activity and assembly of complex I. The chain is NADH-ubiquinone oxidoreductase chain 6 (MT-ND6) from Bos indicus (Zebu).